A 469-amino-acid polypeptide reads, in one-letter code: GTPase Der (469 aa).

EngA-type G domains follow at residues proline 3 to glutamate 167 and proline 176 to phenylalanine 349. GTP contacts are provided by residues glycine 9 to serine 16, aspartate 56 to leucine 60, asparagine 119 to glutamate 122, glycine 182 to serine 189, aspartate 229 to valine 233, and asparagine 294 to aspartate 297. In terms of domain architecture, KH-like spans isoleucine 350–lysine 436. Basic and acidic residues predominate over residues glutamate 432–lysine 443. The segment at glutamate 432–aspartate 469 is disordered. Basic residues predominate over residues methionine 455 to aspartate 469.

This sequence belongs to the TRAFAC class TrmE-Era-EngA-EngB-Septin-like GTPase superfamily. EngA (Der) GTPase family. Associates with the 50S ribosomal subunit.

Functionally, GTPase that plays an essential role in the late steps of ribosome biogenesis. This chain is GTPase Der, found in Thiobacillus denitrificans (strain ATCC 25259 / T1).